The primary structure comprises 381 residues: L-lactate dehydrogenase (381 aa).

The region spanning 1 to 380 (MIISASTDYR…TRDSLVRELG (380 aa)) is the FMN hydroxy acid dehydrogenase domain. Residue Tyr24 coordinates substrate. Ser106 and Gln127 together coordinate FMN. Substrate is bound at residue Tyr129. Thr155 lines the FMN pocket. Position 164 (Arg164) interacts with substrate. An FMN-binding site is contributed by Lys251. Catalysis depends on His275, which acts as the Proton acceptor. Arg278 contributes to the substrate binding site. 306 to 330 (DSGIRSGLDVVRMIALGADTVLIGR) serves as a coordination point for FMN.

It belongs to the FMN-dependent alpha-hydroxy acid dehydrogenase family. In terms of assembly, homotetramer. The cofactor is FMN.

The protein localises to the cell inner membrane. The catalysed reaction is (S)-lactate + A = pyruvate + AH2. Its function is as follows. Catalyzes the conversion of L-lactate to pyruvate. Is coupled to the respiratory chain. The chain is L-lactate dehydrogenase from Pseudomonas entomophila (strain L48).